The primary structure comprises 209 residues: Putative BTB/POZ domain-containing protein At2g40450 (209 aa).

The 75-residue stretch at 24–98 (ADVRLKAGDS…IYRVDGSICS (75 aa)) folds into the BTB domain.

The protein operates within protein modification; protein ubiquitination. In terms of biological role, may act as a substrate-specific adapter of an E3 ubiquitin-protein ligase complex (CUL3-RBX1-BTB) which mediates the ubiquitination and subsequent proteasomal degradation of target proteins. This is Putative BTB/POZ domain-containing protein At2g40450 from Arabidopsis thaliana (Mouse-ear cress).